The chain runs to 1534 residues: DNA-directed RNA polymerase subunit beta'' (1534 aa).

Positions 220, 296, 303, and 306 each coordinate Zn(2+). Composition is skewed to basic and acidic residues over residues 644–668 (RTQE…RTRE) and 678–688 (PENKYRTREGE). Disordered regions lie at residues 644–698 (RTQE…EDEY) and 719–800 (YRTL…KKEG). Composition is skewed to acidic residues over residues 744 to 762 (GEYE…SSED) and 770 to 789 (TLEE…EYGS).

It belongs to the RNA polymerase beta' chain family. RpoC2 subfamily. In terms of assembly, in plastids the minimal PEP RNA polymerase catalytic core is composed of four subunits: alpha, beta, beta', and beta''. When a (nuclear-encoded) sigma factor is associated with the core the holoenzyme is formed, which can initiate transcription. Zn(2+) serves as cofactor.

It localises to the plastid. Its subcellular location is the chloroplast. The catalysed reaction is RNA(n) + a ribonucleoside 5'-triphosphate = RNA(n+1) + diphosphate. Functionally, DNA-dependent RNA polymerase catalyzes the transcription of DNA into RNA using the four ribonucleoside triphosphates as substrates. The polypeptide is DNA-directed RNA polymerase subunit beta'' (Saccharum hybrid (Sugarcane)).